Here is a 291-residue protein sequence, read N- to C-terminus: 33 kDa chaperonin (291 aa).

2 disulfides stabilise this stretch: cysteine 235-cysteine 237 and cysteine 268-cysteine 271.

Belongs to the HSP33 family. In terms of processing, under oxidizing conditions two disulfide bonds are formed involving the reactive cysteines. Under reducing conditions zinc is bound to the reactive cysteines and the protein is inactive.

It is found in the cytoplasm. Redox regulated molecular chaperone. Protects both thermally unfolding and oxidatively damaged proteins from irreversible aggregation. Plays an important role in the bacterial defense system toward oxidative stress. In Bacillus subtilis (strain 168), this protein is 33 kDa chaperonin.